A 390-amino-acid polypeptide reads, in one-letter code: Probable purine permease 7 (390 aa).

A run of 10 helical transmembrane segments spans residues 42 to 62 (WLRV…ATIL), 74 to 94 (TYVV…FRFF), 110 to 130 (SPSF…VSAY), 131 to 151 (AYLS…LILA), 169 to 189 (FTPL…LLVV), 205 to 225 (VIGF…LSLI), 244 to 264 (LAIY…FASG), 286 to 306 (TLAS…GLIF), 312 to 332 (FSNS…VIVF), and 341 to 361 (IFSI…HYLD).

The protein belongs to the purine permeases (TC 2.A.7.14) family.

It localises to the membrane. This is Probable purine permease 7 (PUP7) from Arabidopsis thaliana (Mouse-ear cress).